The chain runs to 440 residues: Aspartokinase (440 aa).

This sequence belongs to the aspartokinase family.

The catalysed reaction is L-aspartate + ATP = 4-phospho-L-aspartate + ADP. Its pathway is amino-acid biosynthesis; L-lysine biosynthesis via DAP pathway; (S)-tetrahydrodipicolinate from L-aspartate: step 1/4. It participates in amino-acid biosynthesis; L-methionine biosynthesis via de novo pathway; L-homoserine from L-aspartate: step 1/3. The protein operates within amino-acid biosynthesis; L-threonine biosynthesis; L-threonine from L-aspartate: step 1/5. The protein is Aspartokinase (lysC) of Chlamydia pneumoniae (Chlamydophila pneumoniae).